A 158-amino-acid chain; its full sequence is Tryptophan-rich protein TspO (158 aa).

A run of 5 helical transmembrane segments spans residues 5 to 25 (ILTL…GSTF), 48 to 68 (LFPP…AKVL), 79 to 99 (VGVV…ASFF), 105 to 125 (LAGL…MLAF), and 134 to 154 (LLLV…FTIL).

The protein belongs to the TspO/BZRP family.

It localises to the membrane. The protein localises to the cell membrane. Functionally, binds tetrapyrroles and promotes the photooxidative degradation of protoporphyrin IX. Can bind the benzodiazepine receptor agonist PK-11195 (in vitro); this interferes with photooxidative tetrapyrrole degradation. May play a role in the transmembrane transport of tetrapyrroles and similar compounds. This Chlorobaculum tepidum (strain ATCC 49652 / DSM 12025 / NBRC 103806 / TLS) (Chlorobium tepidum) protein is Tryptophan-rich protein TspO.